Consider the following 302-residue polypeptide: Enoyl-CoA delta isomerase 1, mitochondrial (302 aa).

The N-terminal 41 residues, 1-41 (MALVASVRVPARVLLRAGARLPGAALGRTERAAGGGDGARR), are a transit peptide targeting the mitochondrion. Position 61 is an N6-acetyllysine; alternate (Lys61). N6-succinyllysine; alternate is present on Lys61. Lys84 bears the N6-succinyllysine mark. An N6-acetyllysine modification is found at Lys89. Substrate is bound by residues 106–110 (AGLDL), Gly153, and Asn177. Position 283 is an N6-acetyllysine; alternate (Lys283). The residue at position 283 (Lys283) is an N6-succinyllysine; alternate. An N6-succinyllysine modification is found at Lys288.

This sequence belongs to the enoyl-CoA hydratase/isomerase family. In terms of assembly, homotrimer. As to expression, expressed in liver (at protein level).

The protein localises to the mitochondrion matrix. The enzyme catalyses a (3Z)-enoyl-CoA = a 4-saturated (2E)-enoyl-CoA. It carries out the reaction a (3E)-enoyl-CoA = a 4-saturated (2E)-enoyl-CoA. The catalysed reaction is (3Z)-octenoyl-CoA = (2E)-octenoyl-CoA. It catalyses the reaction (2E)-tetradecenoyl-CoA = (3Z)-tetradecenoyl-CoA. The enzyme catalyses (3Z)-dodecenoyl-CoA = (2E)-dodecenoyl-CoA. It carries out the reaction (3Z)-hexenoyl-CoA = (2E)-hexenoyl-CoA. The catalysed reaction is (3Z)-decenoyl-CoA = (2E)-decenoyl-CoA. It functions in the pathway lipid metabolism; fatty acid beta-oxidation. Key enzyme of fatty acid beta-oxidation. Able to isomerize both 3-cis (3Z) and 3-trans (3E) double bonds into the 2-trans (2E) form in a range of enoyl-CoA species, with a preference for (3Z)-enoyl-CoAs over (3E)-enoyl-CoAs. The catalytic efficiency of this enzyme is not affected by the fatty acyl chain length. The sequence is that of Enoyl-CoA delta isomerase 1, mitochondrial (ECI1) from Homo sapiens (Human).